The primary structure comprises 298 residues: Glycine--tRNA ligase alpha subunit (298 aa).

Belongs to the class-II aminoacyl-tRNA synthetase family. As to quaternary structure, tetramer of two alpha and two beta subunits.

The protein localises to the cytoplasm. It catalyses the reaction tRNA(Gly) + glycine + ATP = glycyl-tRNA(Gly) + AMP + diphosphate. The chain is Glycine--tRNA ligase alpha subunit from Helicobacter pylori (strain Shi470).